A 176-amino-acid chain; its full sequence is Isopentenyl-diphosphate Delta-isomerase (176 aa).

2 residues coordinate Mn(2+): histidine 22 and histidine 28. One can recognise a Nudix hydrolase domain in the interval 26-160 (LRHKAVSVFV…PDRYTPWLRI (135 aa)). The active site involves cysteine 62. Mn(2+) is bound at residue histidine 64. Glutamate 82 contributes to the Mg(2+) binding site. Positions 108 and 110 each coordinate Mn(2+). Residue glutamate 110 is part of the active site.

The protein belongs to the IPP isomerase type 1 family. Mg(2+) serves as cofactor. Mn(2+) is required as a cofactor.

Its subcellular location is the cytoplasm. It carries out the reaction isopentenyl diphosphate = dimethylallyl diphosphate. It participates in isoprenoid biosynthesis; dimethylallyl diphosphate biosynthesis; dimethylallyl diphosphate from isopentenyl diphosphate: step 1/1. It functions in the pathway porphyrin-containing compound metabolism; chlorophyll biosynthesis. In terms of biological role, catalyzes the 1,3-allylic rearrangement of the homoallylic substrate isopentenyl (IPP) to its highly electrophilic allylic isomer, dimethylallyl diphosphate (DMAPP). This is Isopentenyl-diphosphate Delta-isomerase from Roseobacter denitrificans (strain ATCC 33942 / OCh 114) (Erythrobacter sp. (strain OCh 114)).